We begin with the raw amino-acid sequence, 923 residues long: SPX and EXS domain-containing protein 1 (923 aa).

Residues 1–326 (MKFGKKLRFE…PMNSSIKLDQ (326 aa)) form the SPX domain. Low complexity-rich tracts occupy residues 94–147 (QEQS…QQQQ) and 186–195 (TTTTTTTTTT). Disordered stretches follow at residues 94–150 (QEQS…QDLK) and 185–208 (PTTTTTTTTTTMNTSAGSGIFKNK). The next 9 membrane-spanning stretches (helical) occupy residues 382–402 (LKLGFAIGLSIGILAFVIILF), 416–436 (FVSTIPIFRAVGIPILAVWLW), 471–491 (ASFLTAIWLTMFLLFCGTVTG), 499–519 (PAQVYPLVLVIFFLSVVFFPF), 529–551 (LLFITLGNVIITPFGSTKFRALF), 591–611 (SIALPILSGLPLLWRFMQCIL), 620–640 (IHLGNSTKYAVGFSVVLFSAL), 655–675 (ILWCVCFVLSTLYMYCWDVVV), and 700–720 (WSYYYVLFSNLILRFAWTLTI). An EXS domain is found at 585–785 (RCNQVNSIAL…KNEVPKVESP (201 aa)). The tract at residues 793–871 (SSYPYRQDNF…NNSPSGSNSS (79 aa)) is disordered.

It belongs to the SYG1 (TC 2.A.94) family.

Its subcellular location is the membrane. In Dictyostelium discoideum (Social amoeba), this protein is SPX and EXS domain-containing protein 1.